The following is a 227-amino-acid chain: Cytidylate kinase (227 aa).

12-20 (GPSGAGKGT) is a binding site for ATP.

The protein belongs to the cytidylate kinase family. Type 1 subfamily.

Its subcellular location is the cytoplasm. It catalyses the reaction CMP + ATP = CDP + ADP. The enzyme catalyses dCMP + ATP = dCDP + ADP. This is Cytidylate kinase from Escherichia fergusonii (strain ATCC 35469 / DSM 13698 / CCUG 18766 / IAM 14443 / JCM 21226 / LMG 7866 / NBRC 102419 / NCTC 12128 / CDC 0568-73).